Reading from the N-terminus, the 231-residue chain is Probable pseudouridine-5'-phosphatase (231 aa).

The active-site Nucleophile is the Asp15. Residues Asp15 and Asp17 each coordinate Mg(2+). The active-site Proton donor is the Asp17.

It belongs to the HAD-like hydrolase superfamily. CbbY/CbbZ/Gph/YieH family. Requires Mg(2+) as cofactor.

It catalyses the reaction psi-UMP + H2O = pseudouridine + phosphate. In terms of biological role, dephosphorylates pseudouridine 5'-phosphate, a potential intermediate in rRNA degradation. The sequence is that of Probable pseudouridine-5'-phosphatase (Gs1l) from Drosophila melanogaster (Fruit fly).